Reading from the N-terminus, the 378-residue chain is Glutamate 5-kinase (378 aa).

Residue K20 coordinates ATP. Positions 60, 147, and 159 each coordinate substrate. ATP is bound by residues 179–180 (TD) and 221–227 (TGGMLTK). A PUA domain is found at 286–364 (RGRVVLDAGA…SQIARILGSM (79 aa)).

It belongs to the glutamate 5-kinase family.

The protein localises to the cytoplasm. It carries out the reaction L-glutamate + ATP = L-glutamyl 5-phosphate + ADP. It participates in amino-acid biosynthesis; L-proline biosynthesis; L-glutamate 5-semialdehyde from L-glutamate: step 1/2. Catalyzes the transfer of a phosphate group to glutamate to form L-glutamate 5-phosphate. In Bordetella petrii (strain ATCC BAA-461 / DSM 12804 / CCUG 43448), this protein is Glutamate 5-kinase.